The following is a 98-amino-acid chain: Alpha-elicitin DRE-alpha (98 aa).

Intrachain disulfides connect Cys-3–Cys-71, Cys-27–Cys-56, and Cys-51–Cys-95.

Belongs to the elicitin family.

It localises to the secreted. Induces local and distal defense responses (incompatible hypersensitive reaction) in plants from the solanaceae and cruciferae families. Elicits leaf necrosis and causes the accumulation of pathogenesis-related proteins. Might interact with the lipidic molecules of the plasma membrane. The polypeptide is Alpha-elicitin DRE-alpha (Phytophthora drechsleri).